A 96-amino-acid polypeptide reads, in one-letter code: Citrate lyase acyl carrier protein (96 aa).

At S14 the chain carries O-(phosphoribosyl dephospho-coenzyme A)serine.

Belongs to the CitD family. As to quaternary structure, oligomer with a subunit composition of (alpha,beta,gamma)6.

The protein localises to the cytoplasm. Its function is as follows. Covalent carrier of the coenzyme of citrate lyase. The chain is Citrate lyase acyl carrier protein from Pectobacterium carotovorum subsp. carotovorum (strain PC1).